Consider the following 524-residue polypeptide: Protein hunchback (524 aa).

Disordered stretches follow at residues 42 to 86 and 101 to 187; these read IVKR…PQTQ and YNHN…DEQS. Residues 59–75 are compositionally biased toward low complexity; it reads SGSDFHSSSPSSDTSQD. Residues 76 to 86 are compositionally biased toward polar residues; it reads LQHSYQSPQTQ. Basic and acidic residues-rich tracts occupy residues 118 to 127, 138 to 154, and 164 to 178; these read KSEKEEKDME, RKPDDNQDHLRRLEMSL, and TSEHSVDELSGKSDN. 4 consecutive C2H2-type zinc fingers follow at residues 202–224, 231–253, 259–281, and 298–311; these read FKCKQCDFVAITKLEQWNHSKVH, LTCPKCPFITEYKHHLEYHLRNH, FQCNKCDYTCVNKSMLNSHMKSH, and YCHSLKIHLRRYGH. Residues 402–442 are disordered; sequence DLSKPGCSYTGEQKSRRKGPAFKVDPTQVESEEEDEETSTT. 2 consecutive C2H2-type zinc fingers follow at residues 471–493 and 499–523; these read NSCQYCNIAFGDAVLYTIHMGYH and FTCNMCGVECSDKVSFFLHIARVSH.

The protein belongs to the hunchback C2H2-type zinc-finger protein family.

The protein localises to the nucleus. Its function is as follows. Gap class segmentation protein that controls development of head structures. In Tribolium castaneum (Red flour beetle), this protein is Protein hunchback (hb).